The chain runs to 354 residues: Ferredoxin--NADP reductase (354 aa).

FAD contacts are provided by D39, Q47, Y52, V92, F127, D296, and T337.

It belongs to the ferredoxin--NADP reductase type 2 family. In terms of assembly, homodimer. It depends on FAD as a cofactor.

The catalysed reaction is 2 reduced [2Fe-2S]-[ferredoxin] + NADP(+) + H(+) = 2 oxidized [2Fe-2S]-[ferredoxin] + NADPH. The polypeptide is Ferredoxin--NADP reductase (Albidiferax ferrireducens (strain ATCC BAA-621 / DSM 15236 / T118) (Rhodoferax ferrireducens)).